The primary structure comprises 200 residues: Holliday junction branch migration complex subunit RuvA (200 aa).

The domain I stretch occupies residues 1 to 64 (MIAKLKGLLD…ENDMRLLGFA (64 aa)). The interval 65-143 (EASERDWFRL…ALPSAPGGAA (79 aa)) is domain II. The segment at 144 to 154 (MAANPAGGASA) is flexible linker. A domain III region spans residues 154–200 (ADAVSALENLGFKPAIAARAVATAQGELGEGASESELIRVALKRAAG).

The protein belongs to the RuvA family. As to quaternary structure, homotetramer. Forms an RuvA(8)-RuvB(12)-Holliday junction (HJ) complex. HJ DNA is sandwiched between 2 RuvA tetramers; dsDNA enters through RuvA and exits via RuvB. An RuvB hexamer assembles on each DNA strand where it exits the tetramer. Each RuvB hexamer is contacted by two RuvA subunits (via domain III) on 2 adjacent RuvB subunits; this complex drives branch migration. In the full resolvosome a probable DNA-RuvA(4)-RuvB(12)-RuvC(2) complex forms which resolves the HJ.

The protein localises to the cytoplasm. The RuvA-RuvB-RuvC complex processes Holliday junction (HJ) DNA during genetic recombination and DNA repair, while the RuvA-RuvB complex plays an important role in the rescue of blocked DNA replication forks via replication fork reversal (RFR). RuvA specifically binds to HJ cruciform DNA, conferring on it an open structure. The RuvB hexamer acts as an ATP-dependent pump, pulling dsDNA into and through the RuvAB complex. HJ branch migration allows RuvC to scan DNA until it finds its consensus sequence, where it cleaves and resolves the cruciform DNA. The chain is Holliday junction branch migration complex subunit RuvA from Erythrobacter litoralis (strain HTCC2594).